A 303-amino-acid polypeptide reads, in one-letter code: N-acetyl-D-glucosamine kinase (303 aa).

ATP-binding positions include 4 to 11 and 133 to 140; these read GFDIGGTK and GVGGGLIF. Zn(2+)-binding residues include H157, C177, C179, and C184.

Belongs to the ROK (NagC/XylR) family. NagK subfamily.

It carries out the reaction N-acetyl-D-glucosamine + ATP = N-acetyl-D-glucosamine 6-phosphate + ADP + H(+). It participates in cell wall biogenesis; peptidoglycan recycling. Catalyzes the phosphorylation of N-acetyl-D-glucosamine (GlcNAc) derived from cell-wall degradation, yielding GlcNAc-6-P. This Escherichia coli O7:K1 (strain IAI39 / ExPEC) protein is N-acetyl-D-glucosamine kinase.